The chain runs to 448 residues: Probable D-serine dehydratase (448 aa).

K119 is subject to N6-(pyridoxal phosphate)lysine.

It belongs to the serine/threonine dehydratase family. DsdA subfamily. Pyridoxal 5'-phosphate is required as a cofactor.

It catalyses the reaction D-serine = pyruvate + NH4(+). This is Probable D-serine dehydratase from Pseudomonas aeruginosa (strain ATCC 15692 / DSM 22644 / CIP 104116 / JCM 14847 / LMG 12228 / 1C / PRS 101 / PAO1).